The chain runs to 303 residues: D-alanine--D-alanine ligase (303 aa).

In terms of domain architecture, ATP-grasp spans 99–293; sequence TYRFLKGTVE…FEELVEIILK (195 aa). 125 to 176 contacts ATP; the sequence is GYPCVVKPRREGSSIGVFVCESDEEFQHALKEDLPRYGSVIVQKYIPGREMT. Positions 248, 260, and 262 each coordinate Mg(2+).

It belongs to the D-alanine--D-alanine ligase family. Requires Mg(2+) as cofactor. It depends on Mn(2+) as a cofactor.

It localises to the cytoplasm. It carries out the reaction 2 D-alanine + ATP = D-alanyl-D-alanine + ADP + phosphate + H(+). It functions in the pathway cell wall biogenesis; peptidoglycan biosynthesis. In terms of biological role, cell wall formation. This is D-alanine--D-alanine ligase from Thermotoga maritima (strain ATCC 43589 / DSM 3109 / JCM 10099 / NBRC 100826 / MSB8).